Reading from the N-terminus, the 250-residue chain is Capsid protein (250 aa).

The segment at 1 to 31 (MPKRDAPWLMAGTSKVSRSGNYSPSGGMGSK) is disordered. The Bipartite nuclear localization signal motif lies at 3–19 (KRDAPWLMAGTSKVSRS). Positions 14-31 (SKVSRSGNYSPSGGMGSK) are enriched in polar residues. Residues 34–48 (KANAWVNRPMYRKPR) carry the Nuclear localization signal motif. A zinc finger lies at 53 to 70 (YKSPDVPKGCEGPCKVQS). The short motif at 95 to 116 (ITHRVGKRFCVKSVYILGKIWM) is the Nuclear export signal element. Residues 194-241 (RRFWKVNNHVVYNHQEAGKYENHTENALLLYMACTHASNPVYATLKIR) carry the Bipartite nuclear localization signal motif.

This sequence belongs to the geminiviridae capsid protein family. Homomultimer. Binds to single-stranded and double-stranded viral DNA. Interacts (via nuclear localization signals) with host importin alpha-1a.

It is found in the virion. It localises to the host nucleus. Its function is as follows. Encapsidates the viral DNA into characteristic twinned ('geminate') particles. Binds the genomic viral ssDNA and shuttles it into and out of the cell nucleus. The CP of bipartite geminiviruses is not required for cell-to-cell or systemic movement. This chain is Capsid protein, found in Bean golden yellow mosaic virus (isolate Puerto Rico) (BGYMV).